Reading from the N-terminus, the 1047-residue chain is Helicase-like transcription factor CHR27 (1047 aa).

Residues 1–11 (MDSAIEISSGS) show a composition bias toward low complexity. 3 disordered regions span residues 1 to 89 (MDSA…SGSG), 103 to 130 (RTLPPSFNSPPLPARSGTNNISNASGSR), and 145 to 174 (KRTLPPSFNPPPLPSRSGTNNIRNAGGSRF). Polar residues-rich tracts occupy residues 52–88 (TNQAPPNGASSDTSRPGVSKPFTGNGNTVNSRISSGS) and 118–128 (SGTNNISNASG). In terms of domain architecture, Helicase ATP-binding spans 296 to 597 (ETSSFNCPGG…YSYFRFLRYD (302 aa)). 309–316 (DDQGLGKT) lines the ATP pocket. Disordered regions lie at residues 349 to 407 (ADDE…TRAF) and 511 to 533 (VGASKKSKRRGRKSTNDTSSEPD). A compositionally biased stretch (basic and acidic residues) spans 354 to 368 (DNAKHESGSHVKPEL). The segment covering 370–379 (VSSNSETSVL) has biased composition (polar residues). Acidic residues predominate over residues 385 to 400 (DENDSSDMEKAEDEEA). Residues 511 to 523 (VGASKKSKRRGRK) show a composition bias toward basic residues. The segment at 751-790 (CYECNEPPEKPVVTLCGHIFCYECVLEYITGDENTCPVPR) adopts an RING-type; degenerate zinc-finger fold. The span at 851-868 (QPDSPNSAQHGQMPSSSR) shows a compositional bias: polar residues. The tract at residues 851-873 (QPDSPNSAQHGQMPSSSRPYDDD) is disordered. The region spanning 887–1042 (SPSQGAVKTI…ATRLTVDDLK (156 aa)) is the Helicase C-terminal domain.

Belongs to the SNF2/RAD54 helicase family. RAD16 subfamily. In terms of assembly, interacts with SUVR2. Interacts with itself.

It localises to the nucleus. Probable helicase-like transcription factor involved in transcriptional gene silencing. Associates with SUVR2 and contributes to transcriptional gene silencing at RNA-directed DNA methylation (RdDM) target loci but also at RdDM-independent target loci. May be involved in nucleosome positioning to form ordered nucleosome arrays on chromatin. Associates with SUVR2 and functions redundantly with FRG2. Required for the efficient methylation of a broad range of RdDM target loci. The polypeptide is Helicase-like transcription factor CHR27 (Arabidopsis thaliana (Mouse-ear cress)).